The sequence spans 20 residues: Cytochrome P450 2A7 (20 aa).

Belongs to the cytochrome P450 family. Heme is required as a cofactor.

The protein resides in the endoplasmic reticulum membrane. The protein localises to the microsome membrane. The catalysed reaction is an organic molecule + reduced [NADPH--hemoprotein reductase] + O2 = an alcohol + oxidized [NADPH--hemoprotein reductase] + H2O + H(+). Exhibits a high coumarin 7-hydroxylase activity. This Papio sp. (Baboon) protein is Cytochrome P450 2A7 (CYP2A7).